Consider the following 681-residue polypeptide: Long-chain-fatty-acid--CoA ligase heimdall (681 aa).

Residues 223–231 (TSGTVGMPK), 414–419 (ECYGMS), Asp-491, Arg-506, and Lys-639 each bind ATP.

It belongs to the ATP-dependent AMP-binding enzyme family. Bubblegum subfamily.

The enzyme catalyses a long-chain fatty acid + ATP + CoA = a long-chain fatty acyl-CoA + AMP + diphosphate. Mediates activation of long-chain fatty acids for both synthesis of cellular lipids, and degradation via beta-oxidation. Probably by regulating lipid storage and catabolism, plays a role in neuronal function. The protein is Long-chain-fatty-acid--CoA ligase heimdall of Drosophila melanogaster (Fruit fly).